The sequence spans 328 residues: Biotin synthase (328 aa).

Residues 48-278 (FTGNSASLCS…GKSLSVCGGR (231 aa)) form the Radical SAM core domain. Cys-66, Cys-70, and Cys-73 together coordinate [4Fe-4S] cluster. [2Fe-2S] cluster contacts are provided by Ser-143 and Cys-203.

This sequence belongs to the radical SAM superfamily. Biotin synthase family. Homodimer. It depends on [4Fe-4S] cluster as a cofactor. [2Fe-2S] cluster is required as a cofactor.

The catalysed reaction is (4R,5S)-dethiobiotin + (sulfur carrier)-SH + 2 reduced [2Fe-2S]-[ferredoxin] + 2 S-adenosyl-L-methionine = (sulfur carrier)-H + biotin + 2 5'-deoxyadenosine + 2 L-methionine + 2 oxidized [2Fe-2S]-[ferredoxin]. Its pathway is cofactor biosynthesis; biotin biosynthesis; biotin from 7,8-diaminononanoate: step 2/2. Its function is as follows. Catalyzes the conversion of dethiobiotin (DTB) to biotin by the insertion of a sulfur atom into dethiobiotin via a radical-based mechanism. The sequence is that of Biotin synthase from Pelobacter propionicus (strain DSM 2379 / NBRC 103807 / OttBd1).